Reading from the N-terminus, the 262-residue chain is Glucosamine-6-phosphate deaminase (262 aa).

Aspartate 63 (proton acceptor; for enolization step) is an active-site residue. The For ring-opening step role is filled by asparagine 129. Histidine 131 (proton acceptor; for ring-opening step) is an active-site residue. Glutamate 136 serves as the catalytic For ring-opening step.

This sequence belongs to the glucosamine/galactosamine-6-phosphate isomerase family. NagB subfamily.

It carries out the reaction alpha-D-glucosamine 6-phosphate + H2O = beta-D-fructose 6-phosphate + NH4(+). Its pathway is amino-sugar metabolism; N-acetylneuraminate degradation; D-fructose 6-phosphate from N-acetylneuraminate: step 5/5. In terms of biological role, catalyzes the reversible isomerization-deamination of glucosamine 6-phosphate (GlcN6P) to form fructose 6-phosphate (Fru6P) and ammonium ion. The polypeptide is Glucosamine-6-phosphate deaminase (Bacillus cytotoxicus (strain DSM 22905 / CIP 110041 / 391-98 / NVH 391-98)).